The sequence spans 151 residues: SsrA-binding protein (151 aa).

Residues 132–151 (KRQTIKKRDQDREIHRKYGI) form a disordered region.

It belongs to the SmpB family.

Its subcellular location is the cytoplasm. Its function is as follows. Required for rescue of stalled ribosomes mediated by trans-translation. Binds to transfer-messenger RNA (tmRNA), required for stable association of tmRNA with ribosomes. tmRNA and SmpB together mimic tRNA shape, replacing the anticodon stem-loop with SmpB. tmRNA is encoded by the ssrA gene; the 2 termini fold to resemble tRNA(Ala) and it encodes a 'tag peptide', a short internal open reading frame. During trans-translation Ala-aminoacylated tmRNA acts like a tRNA, entering the A-site of stalled ribosomes, displacing the stalled mRNA. The ribosome then switches to translate the ORF on the tmRNA; the nascent peptide is terminated with the 'tag peptide' encoded by the tmRNA and targeted for degradation. The ribosome is freed to recommence translation, which seems to be the essential function of trans-translation. This chain is SsrA-binding protein, found in Lactobacillus johnsonii (strain CNCM I-12250 / La1 / NCC 533).